We begin with the raw amino-acid sequence, 241 residues long: Ribose-5-phosphate isomerase A (241 aa).

Residues 29-32 (TGTT), 84-87 (DGAD), and 97-100 (KGGG) contribute to the substrate site. The active-site Proton acceptor is the Glu-106. Lys-124 lines the substrate pocket.

This sequence belongs to the ribose 5-phosphate isomerase family. Homodimer.

It catalyses the reaction aldehydo-D-ribose 5-phosphate = D-ribulose 5-phosphate. The protein operates within carbohydrate degradation; pentose phosphate pathway; D-ribose 5-phosphate from D-ribulose 5-phosphate (non-oxidative stage): step 1/1. Functionally, catalyzes the reversible conversion of ribose-5-phosphate to ribulose 5-phosphate. The polypeptide is Ribose-5-phosphate isomerase A (Thermoplasma acidophilum (strain ATCC 25905 / DSM 1728 / JCM 9062 / NBRC 15155 / AMRC-C165)).